Consider the following 309-residue polypeptide: Diadenylate cyclase (309 aa).

One can recognise a DAC domain in the interval 144 to 301 (TITLYELFET…DGKIVFETDP (158 aa)).

This sequence belongs to the adenylate cyclase family. DacZ subfamily. The cofactor is Mn(2+).

The catalysed reaction is 2 ATP = 3',3'-c-di-AMP + 2 diphosphate. Its function is as follows. Diadenylate cyclase that catalyzes the condensation of 2 ATP molecules into cyclic di-AMP (c-di-AMP). c-di-AMP is a second messenger for intracellular signal transduction involved in the control of important regulatory processes such as osmoregulation. This chain is Diadenylate cyclase, found in Methanocaldococcus jannaschii (strain ATCC 43067 / DSM 2661 / JAL-1 / JCM 10045 / NBRC 100440) (Methanococcus jannaschii).